We begin with the raw amino-acid sequence, 87 residues long: Cell division topological specificity factor (87 aa).

It belongs to the MinE family.

Functionally, prevents the cell division inhibition by proteins MinC and MinD at internal division sites while permitting inhibition at polar sites. This ensures cell division at the proper site by restricting the formation of a division septum at the midpoint of the long axis of the cell. This chain is Cell division topological specificity factor, found in Vibrio vulnificus (strain CMCP6).